Consider the following 272-residue polypeptide: ATP synthase subunit delta (272 aa).

This sequence belongs to the ATPase delta chain family. In terms of assembly, F-type ATPases have 2 components, F(1) - the catalytic core - and F(0) - the membrane proton channel. F(1) has five subunits: alpha(3), beta(3), gamma(1), delta(1), epsilon(1). F(0) has three main subunits: a(1), b(2) and c(10-14). The alpha and beta chains form an alternating ring which encloses part of the gamma chain. F(1) is attached to F(0) by a central stalk formed by the gamma and epsilon chains, while a peripheral stalk is formed by the delta and b chains.

The protein resides in the cell membrane. In terms of biological role, f(1)F(0) ATP synthase produces ATP from ADP in the presence of a proton or sodium gradient. F-type ATPases consist of two structural domains, F(1) containing the extramembraneous catalytic core and F(0) containing the membrane proton channel, linked together by a central stalk and a peripheral stalk. During catalysis, ATP synthesis in the catalytic domain of F(1) is coupled via a rotary mechanism of the central stalk subunits to proton translocation. Functionally, this protein is part of the stalk that links CF(0) to CF(1). It either transmits conformational changes from CF(0) to CF(1) or is implicated in proton conduction. This chain is ATP synthase subunit delta, found in Corynebacterium jeikeium (strain K411).